Consider the following 341-residue polypeptide: Eukaryotic translation initiation factor 3 subunit I (341 aa).

WD repeat units follow at residues 8 to 49 (GHER…GTYH), 50 to 91 (GHQG…HTWE), 145 to 184 (CDES…QLHS), 189 to 228 (DMGS…VLKT), and 286 to 325 (GHFG…FDFM).

It belongs to the eIF-3 subunit I family. In terms of assembly, component of the eukaryotic translation initiation factor 3 (eIF-3) complex.

It localises to the cytoplasm. Functionally, component of the eukaryotic translation initiation factor 3 (eIF-3) complex, which is involved in protein synthesis of a specialized repertoire of mRNAs and, together with other initiation factors, stimulates binding of mRNA and methionyl-tRNAi to the 40S ribosome. The eIF-3 complex specifically targets and initiates translation of a subset of mRNAs involved in cell proliferation. The protein is Eukaryotic translation initiation factor 3 subunit I of Pyricularia oryzae (strain 70-15 / ATCC MYA-4617 / FGSC 8958) (Rice blast fungus).